The primary structure comprises 481 residues: Abietadienol/abietadienal oxidase (481 aa).

Residues 2–22 form a helical membrane-spanning segment; that stretch reads ADQISLLLVVFTAAVALLHLI. A heme-binding site is contributed by Cys-430.

The protein belongs to the cytochrome P450 family. Requires heme as cofactor. Expressed in young tissues such as flushing buds and green bark tissues. Lower levels in mature needles and bark.

The protein resides in the membrane. It carries out the reaction abieta-7,13-dien-18-ol + 2 reduced [NADPH--hemoprotein reductase] + 2 O2 = abieta-7,13-dien-18-oate + 2 oxidized [NADPH--hemoprotein reductase] + 3 H2O + 3 H(+). Multifunctional and multisubstrate cytochrome P450 that oxidizes the respective carbon 18 of abietadienol, abietadienal, levopimaradienol, isopimara-7,15-dienol, isopimara-7,15-dienal, dehydroabietadienol, and dehydroabietadienal. This Pinus taeda (Loblolly pine) protein is Abietadienol/abietadienal oxidase (CYP720B1).